Here is a 137-residue protein sequence, read N- to C-terminus: Succinate dehydrogenase cytochrome b560 subunit (137 aa).

The next 2 helical transmembrane spans lie at 31-51 (AFLATMVLFSILFFKIGDLSL) and 60-80 (FFFLTFYLNWFIISLVNFTLL). Histidine 85 contributes to the heme binding site. The helical transmembrane segment at 106 to 126 (VYTSGIIMLFCAAFLALLNII) threads the bilayer.

The protein belongs to the cytochrome b560 family. As to quaternary structure, forms part of complex II containing four subunits: a 70 kDa flavoprotein (FP), a 27 kDa iron-sulfur protein (IP), a cytochrome B and a membrane-anchoring protein. It depends on heme as a cofactor.

The protein resides in the mitochondrion inner membrane. It participates in carbohydrate metabolism; tricarboxylic acid cycle. Membrane-anchoring subunit of succinate dehydrogenase (SDH) that is involved in complex II of the mitochondrial electron transport chain and is responsible for transferring electrons from succinate to ubiquinone (coenzyme Q). In Marchantia polymorpha (Common liverwort), this protein is Succinate dehydrogenase cytochrome b560 subunit (SDH3).